We begin with the raw amino-acid sequence, 196 residues long: NAD(P)H-quinone oxidoreductase subunit I (196 aa).

4Fe-4S ferredoxin-type domains are found at residues G55–E84 and K95–E124. [4Fe-4S] cluster contacts are provided by C64, C67, C70, C74, C104, C107, C110, and C114. The interval S170–S196 is disordered.

This sequence belongs to the complex I 23 kDa subunit family. As to quaternary structure, NDH-1 is composed of at least 11 different subunits. It depends on [4Fe-4S] cluster as a cofactor.

The protein resides in the cellular thylakoid membrane. It catalyses the reaction a plastoquinone + NADH + (n+1) H(+)(in) = a plastoquinol + NAD(+) + n H(+)(out). The catalysed reaction is a plastoquinone + NADPH + (n+1) H(+)(in) = a plastoquinol + NADP(+) + n H(+)(out). NDH-1 shuttles electrons from an unknown electron donor, via FMN and iron-sulfur (Fe-S) centers, to quinones in the respiratory and/or the photosynthetic chain. The immediate electron acceptor for the enzyme in this species is believed to be plastoquinone. Couples the redox reaction to proton translocation, and thus conserves the redox energy in a proton gradient. This chain is NAD(P)H-quinone oxidoreductase subunit I, found in Crocosphaera subtropica (strain ATCC 51142 / BH68) (Cyanothece sp. (strain ATCC 51142)).